We begin with the raw amino-acid sequence, 236 residues long: Dolichol-phosphate mannosyltransferase (236 aa).

GDP-alpha-D-mannose contacts are provided by Pro9, Tyr11, Glu13, Ile40, Asp42, Asp95, Ala96, Asp97, Arg124, Val160, Arg211, and Lys217. Residue Asp97 participates in Mg(2+) binding. Position 97 (Asp97) interacts with Mn(2+).

Belongs to the glycosyltransferase 2 family. In terms of assembly, component of the dolichol-phosphate mannose (DPM) synthase complex composed of dpm1, dpm2 and dpm3. Requires Mg(2+) as cofactor. It depends on Mn(2+) as a cofactor. Ca(2+) serves as cofactor.

It is found in the endoplasmic reticulum. The enzyme catalyses a di-trans,poly-cis-dolichyl phosphate + GDP-alpha-D-mannose = a di-trans,poly-cis-dolichyl beta-D-mannosyl phosphate + GDP. It participates in protein modification; protein glycosylation. Transfers mannose from GDP-mannose to dolichol monophosphate to form dolichol phosphate mannose (Dol-P-Man) which is the mannosyl donor in pathways leading to N-glycosylation, glycosyl phosphatidylinositol membrane anchoring, and O-mannosylation of proteins. The polypeptide is Dolichol-phosphate mannosyltransferase (Schizosaccharomyces pombe (strain 972 / ATCC 24843) (Fission yeast)).